Consider the following 360-residue polypeptide: SPRY domain-containing SOCS box protein 3 (360 aa).

The interval 20–55 is disordered; it reads RDQDARSPTLPAEEEAWGYDSDGQHSNSDSDTDLLH. A B30.2/SPRY domain is found at 85–274; it reads LHTFHQIKSC…MKVIRSCCCR (190 aa). An SOCS box domain is found at 264–315; the sequence is SMKVIRSCCCRTSLQYLCCARLRQLLPDSVDSLEVLPLPPGLKQVLGNKLGW. A disordered region spans residues 323-350; it reads RSNQHKGDTSATTSCGSDSDSSCTPGQD. Low complexity predominate over residues 331-346; the sequence is TSATTSCGSDSDSSCT.

It belongs to the SPSB family. Substrate-recognition component of the ECS(SPSB3) complex, composed of spsb3, cul5, elob, elob and rnf7/rbx2.

It is found in the nucleus. It functions in the pathway protein modification; protein ubiquitination. Its function is as follows. Substrate-recognition component of a cullin-5-RING E3 ubiquitin-protein ligase complex (ECS complex, also named CRL5 complex), which mediates the ubiquitination and subsequent proteasomal degradation of target proteins. This chain is SPRY domain-containing SOCS box protein 3 (spsb3), found in Xenopus tropicalis (Western clawed frog).